The primary structure comprises 188 residues: CASP-like protein 4B3 (188 aa).

A disordered region spans residues 1–21 (MSFSPASSEPHDAPAAAGSSV). The Cytoplasmic portion of the chain corresponds to 1 to 42 (MSFSPASSEPHDAPAAAGSSVPASRSIAERWKMEAAPIRARL). Residues 43 to 63 (LLRAFAWLFSLLALVVMATDV) form a helical membrane-spanning segment. At 64-76 (HGRGGAQDFSTYP) the chain is on the extracellular side. A helical transmembrane segment spans residues 77-97 (EYNYCLGMSIIALLYATAQLV). Over 98–114 (RDAHRLSSGRDLVAGRK) the chain is Cytoplasmic. Residues 115 to 135 (AAAVVDFAGDQVVAYSLISGL) form a helical membrane-spanning segment. Residues 136–156 (SAAAPVTDYMRQATDNLFNDS) are Extracellular-facing. Asparagine 154 carries an N-linked (GlcNAc...) asparagine glycan. The helical transmembrane segment at 157 to 177 (AAAAISLAFFAFLAISLSALI) threads the bilayer. Residues 178 to 188 (SGYNLSLEAIV) lie on the Cytoplasmic side of the membrane.

Belongs to the Casparian strip membrane proteins (CASP) family. In terms of assembly, homodimer and heterodimers.

It localises to the cell membrane. This chain is CASP-like protein 4B3, found in Hordeum vulgare subsp. vulgare (Domesticated barley).